A 146-amino-acid chain; its full sequence is Protein PBDC1 homolog (146 aa).

The protein belongs to the PBDC1 family.

It localises to the cytoplasm. In Saccharomyces cerevisiae (strain ATCC 204508 / S288c) (Baker's yeast), this protein is Protein PBDC1 homolog.